Here is a 198-residue protein sequence, read N- to C-terminus: Small ribosomal subunit protein uS7 (198 aa).

It belongs to the universal ribosomal protein uS7 family. As to quaternary structure, part of the 30S ribosomal subunit.

Its function is as follows. One of the primary rRNA binding proteins, it binds directly to 16S rRNA where it nucleates assembly of the head domain of the 30S subunit. Is located at the subunit interface close to the decoding center. In Nanoarchaeum equitans (strain Kin4-M), this protein is Small ribosomal subunit protein uS7.